The primary structure comprises 420 residues: MQNLLEALVPRSLVHDQTPGLQARLAQGPITGYVGFDPTADSLHVGHLLAVMSLAWLQRCGGTPIIVVGGGTGMVGDPSGKRSERPVLSVEEIDRNVAAIRAQLERFVSFEGQNAARVRNNADWLRSIGLMEFLRDVGKHFTVNYMLAKDSVKGRMESGISFTEFSYQLIQAYDFWHLFHAERCELQMGGSDQWGNITAGAELVSRKDGASVHGLTFPLLTTASGTKFGKTEGGAVWLDPARTSPYKFFQFWLNTDDRDVERLLKFFTFLSLDEIAALLAEQARDPGKRPAQRRLAEDVTARVHGPDVTRSVIEASRILFGGTDLRAAGVDVLDVLAGEIPSATVTGDELAALTVADLLVKVGLAASKGEVRRGVAGRGFSLNGAVLESGDAKVAAGELLAGGYALLQKGKRNYALVKVR.

L-tyrosine is bound at residue tyrosine 33. The short motif at 38–47 (PTADSLHVGH) is the 'HIGH' region element. Positions 167 and 171 each coordinate L-tyrosine. The 'KMSKS' region signature appears at 227–231 (KFGKT). Lysine 230 lines the ATP pocket. The region spanning 353–419 (LTVADLLVKV…GKRNYALVKV (67 aa)) is the S4 RNA-binding domain.

This sequence belongs to the class-I aminoacyl-tRNA synthetase family. TyrS type 1 subfamily. In terms of assembly, homodimer.

It is found in the cytoplasm. It carries out the reaction tRNA(Tyr) + L-tyrosine + ATP = L-tyrosyl-tRNA(Tyr) + AMP + diphosphate + H(+). Catalyzes the attachment of tyrosine to tRNA(Tyr) in a two-step reaction: tyrosine is first activated by ATP to form Tyr-AMP and then transferred to the acceptor end of tRNA(Tyr). In Anaeromyxobacter dehalogenans (strain 2CP-C), this protein is Tyrosine--tRNA ligase.